A 162-amino-acid polypeptide reads, in one-letter code: Phosphopantetheine adenylyltransferase (162 aa).

Position 11 (Ser11) interacts with substrate. ATP contacts are provided by residues 11–12 and His19; that span reads SF. Substrate-binding residues include Lys43, Val76, and Arg90. Residues 91-93, Glu101, and 126-132 contribute to the ATP site; these read GLR and HLYISSS.

The protein belongs to the bacterial CoaD family. Homohexamer. It depends on Mg(2+) as a cofactor.

It is found in the cytoplasm. It carries out the reaction (R)-4'-phosphopantetheine + ATP + H(+) = 3'-dephospho-CoA + diphosphate. It functions in the pathway cofactor biosynthesis; coenzyme A biosynthesis; CoA from (R)-pantothenate: step 4/5. Reversibly transfers an adenylyl group from ATP to 4'-phosphopantetheine, yielding dephospho-CoA (dPCoA) and pyrophosphate. The chain is Phosphopantetheine adenylyltransferase from Streptococcus pneumoniae (strain 70585).